A 215-amino-acid polypeptide reads, in one-letter code: UPF0502 protein Shew_1617 (215 aa).

It belongs to the UPF0502 family.

This chain is UPF0502 protein Shew_1617, found in Shewanella loihica (strain ATCC BAA-1088 / PV-4).